Consider the following 201-residue polypeptide: Probable GTP-binding protein EngB (201 aa).

Residues 23–196 (TGPEIALAGR…HEAVEEILSM (174 aa)) form the EngB-type G domain. Residues 31-38 (GRSNVGKS), 58-62 (GKTQM), 76-79 (DLPG), 143-146 (TKAD), and 175-177 (YSA) contribute to the GTP site. Mg(2+) contacts are provided by Ser38 and Thr60.

This sequence belongs to the TRAFAC class TrmE-Era-EngA-EngB-Septin-like GTPase superfamily. EngB GTPase family. Mg(2+) is required as a cofactor.

Its function is as follows. Necessary for normal cell division and for the maintenance of normal septation. The polypeptide is Probable GTP-binding protein EngB (Desulfitobacterium hafniense (strain DSM 10664 / DCB-2)).